We begin with the raw amino-acid sequence, 384 residues long: Succinyl-diaminopimelate desuccinylase (384 aa).

A Zn(2+)-binding site is contributed by H71. The active site involves D73. D104 is a Zn(2+) binding site. E139 serves as the catalytic Proton acceptor. 3 residues coordinate Zn(2+): E140, E168, and H357.

Belongs to the peptidase M20A family. DapE subfamily. As to quaternary structure, homodimer. Requires Zn(2+) as cofactor. Co(2+) is required as a cofactor.

It carries out the reaction N-succinyl-(2S,6S)-2,6-diaminopimelate + H2O = (2S,6S)-2,6-diaminopimelate + succinate. It functions in the pathway amino-acid biosynthesis; L-lysine biosynthesis via DAP pathway; LL-2,6-diaminopimelate from (S)-tetrahydrodipicolinate (succinylase route): step 3/3. In terms of biological role, catalyzes the hydrolysis of N-succinyl-L,L-diaminopimelic acid (SDAP), forming succinate and LL-2,6-diaminopimelate (DAP), an intermediate involved in the bacterial biosynthesis of lysine and meso-diaminopimelic acid, an essential component of bacterial cell walls. This is Succinyl-diaminopimelate desuccinylase from Afipia carboxidovorans (strain ATCC 49405 / DSM 1227 / KCTC 32145 / OM5) (Oligotropha carboxidovorans).